Consider the following 1405-residue polypeptide: DNA-directed RNA polymerase subunit beta' (1405 aa).

C70, C72, C85, and C88 together coordinate Zn(2+). D460, D462, and D464 together coordinate Mg(2+). Zn(2+)-binding residues include C815, C890, C897, and C900. The segment at 1375–1405 (GLTDSEMETLSGKPAGAEPVAALADAGADEE) is disordered.

The protein belongs to the RNA polymerase beta' chain family. As to quaternary structure, the RNAP catalytic core consists of 2 alpha, 1 beta, 1 beta' and 1 omega subunit. When a sigma factor is associated with the core the holoenzyme is formed, which can initiate transcription. Mg(2+) serves as cofactor. Zn(2+) is required as a cofactor.

It catalyses the reaction RNA(n) + a ribonucleoside 5'-triphosphate = RNA(n+1) + diphosphate. DNA-dependent RNA polymerase catalyzes the transcription of DNA into RNA using the four ribonucleoside triphosphates as substrates. In Xanthomonas oryzae pv. oryzae (strain MAFF 311018), this protein is DNA-directed RNA polymerase subunit beta'.